The following is a 118-amino-acid chain: Small ribosomal subunit protein mS37 (118 aa).

Positions 42 to 84 constitute a CHCH domain; sequence EATCITEMSVMMACWKQNEFRDDACRKEIQGFLDCAARAQEAR. Short sequence motifs (cx9C motif) lie at residues 45–55 and 66–76; these read CITEMSVMMAC and CRKEIQGFLDC. Disulfide bonds link Cys45-Cys76 and Cys55-Cys66.

It belongs to the mitochondrion-specific ribosomal protein mS37 family. In terms of assembly, component of the mitochondrial small ribosomal subunit (mt-SSU). Mature mammalian 55S mitochondrial ribosomes consist of a small (28S) and a large (39S) subunit. The 28S small subunit contains a 12S ribosomal RNA (12S mt-rRNA) and 30 different proteins. The 39S large subunit contains a 16S rRNA (16S mt-rRNA), a copy of mitochondrial valine transfer RNA (mt-tRNA(Val)), which plays an integral structural role, and 52 different proteins.

The protein localises to the mitochondrion. The protein resides in the nucleus. This is Small ribosomal subunit protein mS37 (CHCHD1) from Homo sapiens (Human).